Reading from the N-terminus, the 111-residue chain is uncharacterized protein (111 aa).

3 consecutive transmembrane segments (helical) span residues 4–23, 39–61, and 65–84; these read LHQV…LGHV, IYLG…VLSA, and SGIQ…EAVL.

The protein localises to the cell membrane. This is an uncharacterized protein from Bacillus subtilis (strain 168).